A 309-amino-acid chain; its full sequence is Foldase protein PrsA (309 aa).

Positions 1-20 are cleaved as a signal peptide; sequence MKKKIVAGAVTLLSVAVLAA. The N-palmitoyl cysteine moiety is linked to residue cysteine 21. Cysteine 21 is lipidated: S-diacylglycerol cysteine. Positions 144-241 constitute a PpiC domain; that stretch reads TPEVTAQIIK…ASYYIVKLVS (98 aa).

Belongs to the PrsA family.

The protein localises to the cell membrane. It catalyses the reaction [protein]-peptidylproline (omega=180) = [protein]-peptidylproline (omega=0). Functionally, plays a major role in protein secretion by helping the post-translocational extracellular folding of several secreted proteins. The chain is Foldase protein PrsA from Streptococcus gordonii (strain Challis / ATCC 35105 / BCRC 15272 / CH1 / DL1 / V288).